We begin with the raw amino-acid sequence, 88 residues long: MNDLIQSLKSYNVIIKDYAEYIKFLDSSTTGFGFVSTSVSKTKQTEEVCALFDCLGLECILDIKRAAGDLKDGRVPAQHDAVTQPADS.

This Elephantid herpesvirus 1 (isolate Asian elephant/Berlin/Kiba/1998) (EIHV-1) protein is Protein U62.